We begin with the raw amino-acid sequence, 224 residues long: PKHD-type hydroxylase Sbal_3634 (224 aa).

A Fe2OG dioxygenase domain is found at 78 to 176 (QFYPPLFNRY…RTAAFMWLQS (99 aa)). 3 residues coordinate Fe cation: His96, Asp98, and His157. Arg167 provides a ligand contact to 2-oxoglutarate.

Fe(2+) is required as a cofactor. L-ascorbate serves as cofactor.

The polypeptide is PKHD-type hydroxylase Sbal_3634 (Shewanella baltica (strain OS155 / ATCC BAA-1091)).